Consider the following 144-residue polypeptide: UPF0299 membrane protein MS1271 (144 aa).

4 helical membrane-spanning segments follow: residues 5–25 (IFLFVRSLIILYLILFIGEGI), 28–48 (LIPIGIPGSIFGLLILFIGLT), 57–77 (VFFGASLLIRYMAVLFVPVSV), and 92–112 (SLLIPNIVSTCVTLLVIGFLG).

This sequence belongs to the UPF0299 family.

Its subcellular location is the cell inner membrane. The chain is UPF0299 membrane protein MS1271 from Mannheimia succiniciproducens (strain KCTC 0769BP / MBEL55E).